Here is a 917-residue protein sequence, read N- to C-terminus: Protein Ami (917 aa).

The first 30 residues, 1–30 (MKKLVKSAVVFAGLVFIGTSATMITEKASA), serve as a signal peptide directing secretion. The N-acetylmuramoyl-L-alanine amidase domain occupies 118 to 245 (KPEGIVIHET…YLGGTTHTDP (128 aa)). A GW repeat region, necessary and sufficient for cell surface attachment region spans residues 262 to 917 (LINEKYKAMQ…KAANLSAKKQ (656 aa)). GW domains are found at residues 279-358 (YDKA…TFYT), 361-435 (MEKT…TTKY), 440-519 (YDKA…TFYT), 522-596 (MEKN…ATQY), 601-679 (YDKA…TFYT), 682-756 (MEKT…TTKY), 761-840 (YDKA…TFYT), and 843-917 (MEKN…AKKQ).

It in the N-terminal section; belongs to the N-acetylmuramoyl-L-alanine amidase 2 family.

It is found in the cell surface. Its subcellular location is the cell membrane. In terms of biological role, a bacteriolysin able to lyse both L.monocytogenes and S.aureus. This chain is Protein Ami, found in Listeria monocytogenes serotype 1/2a (strain EGD / Mackaness).